A 552-amino-acid chain; its full sequence is Arginine--tRNA ligase (552 aa).

The 'HIGH' region motif lies at 124–134; sequence GNPTGPLHLAH.

Belongs to the class-I aminoacyl-tRNA synthetase family. As to quaternary structure, monomer.

It is found in the cytoplasm. The enzyme catalyses tRNA(Arg) + L-arginine + ATP = L-arginyl-tRNA(Arg) + AMP + diphosphate. The protein is Arginine--tRNA ligase of Tropheryma whipplei (strain Twist) (Whipple's bacillus).